Here is a 75-residue protein sequence, read N- to C-terminus: Antimicrobial peptide Meucin-49-1 (75 aa).

Residues 1-22 (MNKKILLVIFIVTMLIVDEVNS) form the signal peptide.

The protein belongs to the non-disulfide-bridged peptide (NDBP) superfamily. Long chain multifunctional peptide (group 2) family. In terms of tissue distribution, expressed by the venom gland.

It localises to the secreted. Functionally, antimicrobial peptide. In Mesobuthus eupeus (Lesser Asian scorpion), this protein is Antimicrobial peptide Meucin-49-1.